Consider the following 321-residue polypeptide: MLNKLIERENLSFKESYELFNMLLNESEMRIAAYLVALQTKGVTADEIAGFAKAMRDNAVKIDLGEVTDTCGTGGDGSKTINVSTAVSIILACFTKVAKHGNVSITSNSGSANVYEALGCKIPETPEDAKKSMDKTNFVFLFAQKYHPALKKIMPVRNELKVKTIFNILGPLANPANPKYQILGVNSAELCENVAFALSKVGGIKKALLVYGNGLDELTPNGTSKITEYDGKFDTYEVTPKDFGLDYSKIIPCESPDESAKRLIDVFSGKINEDRNFILMNAAAALYTSEIASDFLDGVEIAKEAIESGKVLKKLEEIRNV.

5-phospho-alpha-D-ribose 1-diphosphate is bound by residues G72, 75-76, T80, 82-85, 99-107, and S111; these read GD, NVST, and KHGNVSITS. Residue G72 coordinates anthranilate. Mg(2+) is bound at residue S84. Position 102 (N102) interacts with anthranilate. Anthranilate is bound at residue R157. Mg(2+) contacts are provided by D216 and E217.

This sequence belongs to the anthranilate phosphoribosyltransferase family. As to quaternary structure, homodimer. Mg(2+) is required as a cofactor.

The catalysed reaction is N-(5-phospho-beta-D-ribosyl)anthranilate + diphosphate = 5-phospho-alpha-D-ribose 1-diphosphate + anthranilate. The protein operates within amino-acid biosynthesis; L-tryptophan biosynthesis; L-tryptophan from chorismate: step 2/5. Functionally, catalyzes the transfer of the phosphoribosyl group of 5-phosphorylribose-1-pyrophosphate (PRPP) to anthranilate to yield N-(5'-phosphoribosyl)-anthranilate (PRA). The sequence is that of Anthranilate phosphoribosyltransferase from Methanococcus maripaludis (strain C5 / ATCC BAA-1333).